The chain runs to 311 residues: tRNA-cytidine(32) 2-sulfurtransferase (311 aa).

A PP-loop motif motif is present at residues 47–52 (SGGKDS). [4Fe-4S] cluster contacts are provided by cysteine 122, cysteine 125, and cysteine 213.

It belongs to the TtcA family. Homodimer. Mg(2+) is required as a cofactor. It depends on [4Fe-4S] cluster as a cofactor.

Its subcellular location is the cytoplasm. It carries out the reaction cytidine(32) in tRNA + S-sulfanyl-L-cysteinyl-[cysteine desulfurase] + AH2 + ATP = 2-thiocytidine(32) in tRNA + L-cysteinyl-[cysteine desulfurase] + A + AMP + diphosphate + H(+). It participates in tRNA modification. Catalyzes the ATP-dependent 2-thiolation of cytidine in position 32 of tRNA, to form 2-thiocytidine (s(2)C32). The sulfur atoms are provided by the cysteine/cysteine desulfurase (IscS) system. The polypeptide is tRNA-cytidine(32) 2-sulfurtransferase (Escherichia coli O81 (strain ED1a)).